The sequence spans 417 residues: Riboflavin biosynthesis protein RibBA (417 aa).

The tract at residues 1-204 (MTRLDSIERA…IADLIEWRRK (204 aa)) is DHBP synthase. Residues 28-29 (RE), D33, 141-145 (RPGHT), and E165 each bind D-ribulose 5-phosphate. Residue E29 coordinates Mg(2+). H144 contributes to the Mg(2+) binding site. The tract at residues 205–417 (HEKHVQRIAE…LDDHPEADGA (213 aa)) is GTP cyclohydrolase II. Residue 259–263 (RVHSE) coordinates GTP. The Zn(2+) site is built by C264, C275, and C277. GTP contacts are provided by residues Q280, 303-305 (EGR), and T325. D337 functions as the Proton acceptor; for GTP cyclohydrolase activity in the catalytic mechanism. Residue R339 is the Nucleophile; for GTP cyclohydrolase activity of the active site. GTP contacts are provided by T360 and K365.

The protein in the N-terminal section; belongs to the DHBP synthase family. In the C-terminal section; belongs to the GTP cyclohydrolase II family. The cofactor is Mg(2+). Mn(2+) is required as a cofactor. It depends on Zn(2+) as a cofactor.

It carries out the reaction D-ribulose 5-phosphate = (2S)-2-hydroxy-3-oxobutyl phosphate + formate + H(+). It catalyses the reaction GTP + 4 H2O = 2,5-diamino-6-hydroxy-4-(5-phosphoribosylamino)-pyrimidine + formate + 2 phosphate + 3 H(+). The protein operates within cofactor biosynthesis; riboflavin biosynthesis; 2-hydroxy-3-oxobutyl phosphate from D-ribulose 5-phosphate: step 1/1. It participates in cofactor biosynthesis; riboflavin biosynthesis; 5-amino-6-(D-ribitylamino)uracil from GTP: step 1/4. In terms of biological role, catalyzes the conversion of D-ribulose 5-phosphate to formate and 3,4-dihydroxy-2-butanone 4-phosphate. Catalyzes the conversion of GTP to 2,5-diamino-6-ribosylamino-4(3H)-pyrimidinone 5'-phosphate (DARP), formate and pyrophosphate. In Mycobacteroides abscessus (strain ATCC 19977 / DSM 44196 / CCUG 20993 / CIP 104536 / JCM 13569 / NCTC 13031 / TMC 1543 / L948) (Mycobacterium abscessus), this protein is Riboflavin biosynthesis protein RibBA.